We begin with the raw amino-acid sequence, 113 residues long: UPF0102 protein SUN_0231 (113 aa).

It belongs to the UPF0102 family.

The sequence is that of UPF0102 protein SUN_0231 from Sulfurovum sp. (strain NBC37-1).